Reading from the N-terminus, the 1101-residue chain is Lysylphosphatidylglycerol biosynthesis bifunctional protein LysX (1101 aa).

The segment at 1–601 is phosphatidylglycerol lysyltransferase; that stretch reads MTATRLVRAH…RLHSDGTAPD (601 aa). 7 helical membrane passes run 18–38, 60–80, 84–104, 113–133, 151–171, 183–200, and 207–227; these read VPAAAGWIVGVIATLSLLASV, FPDTSFAWAFVLALLAAALAA, IAWWILTGYMVAAAVWNVTGL, DVGEIIGLGFHLAAIASLLLA, VTLVAGLGVGTLIGWGLLELF, YALNRVGAFAGADAGAFS, and VNALLGLFGAMALMIAAVVLF. The interval 602–1101 is lysine--tRNA ligase; that stretch reads RIGPVGDGAD…TLPFPLAKPR (500 aa). The OB DNA-binding region spans 662 to 740; that stretch reads VTVSGRVLRA…SVLVTRWRLI (79 aa). The Mg(2+) site is built by aspartate 1013 and glutamate 1020.

In the N-terminal section; belongs to the LPG synthetase family. This sequence in the C-terminal section; belongs to the class-II aminoacyl-tRNA synthetase family. Mg(2+) is required as a cofactor.

It is found in the cell membrane. It carries out the reaction tRNA(Lys) + L-lysine + ATP = L-lysyl-tRNA(Lys) + AMP + diphosphate. The enzyme catalyses L-lysyl-tRNA(Lys) + a 1,2-diacyl-sn-glycero-3-phospho-(1'-sn-glycerol) = a 1,2-diacyl-sn-glycero-3-phospho-1'-(3'-O-L-lysyl)-sn-glycerol + tRNA(Lys). Catalyzes the production of L-lysyl-tRNA(Lys)transfer and the transfer of a lysyl group from L-lysyl-tRNA(Lys) to membrane-bound phosphatidylglycerol (PG), which produces lysylphosphatidylglycerol (LPG), one of the components of the bacterial membrane with a positive net charge. LPG synthesis contributes to the resistance to cationic antimicrobial peptides (CAMPs) and likely protects M.tuberculosis against the CAMPs produced by competiting microorganisms (bacteriocins). In fact, the modification of anionic phosphatidylglycerol with positively charged L-lysine results in repulsion of the peptides. The sequence is that of Lysylphosphatidylglycerol biosynthesis bifunctional protein LysX (lysX) from Mycolicibacterium gilvum (strain PYR-GCK) (Mycobacterium gilvum (strain PYR-GCK)).